Here is a 277-residue protein sequence, read N- to C-terminus: MTNTQTEIINELKVSPAIDVAKEVEFRVQFLVDYLRASHAKGFVLGISGGQDSTLAGRLAQLAVERIRAEENSTDYVFYAVRLPYAIQADEDDAQVALEFIAPDKSVTVNVKDATDATEATVAAALELPELTDFNRGNIKARQRMVAQYAIAGQYGLLVIGTDHAAENVTGFFTKFGDGAADLLPLAGLSKRQGAAILEHLGAPSSTWTKIPTADLEEDRPALPDEEALGVSYADIDNYLENKPDVSEGAQQRIEHLWKVGQHKRHLPVTPQEDWWR.

G46–S53 provides a ligand contact to ATP. D52 serves as a coordination point for Mg(2+). R142 is a deamido-NAD(+) binding site. T162 is an ATP binding site. Position 167 (E167) interacts with Mg(2+). Deamido-NAD(+) contacts are provided by K175 and D182. The ATP site is built by K191 and T213. Residue H263–K264 coordinates deamido-NAD(+).

This sequence belongs to the NAD synthetase family. Homodimer.

It catalyses the reaction deamido-NAD(+) + NH4(+) + ATP = AMP + diphosphate + NAD(+) + H(+). It participates in cofactor biosynthesis; NAD(+) biosynthesis; NAD(+) from deamido-NAD(+) (ammonia route): step 1/1. Functionally, catalyzes the ATP-dependent amidation of deamido-NAD to form NAD. Uses ammonia as a nitrogen source. This chain is NH(3)-dependent NAD(+) synthetase, found in Corynebacterium glutamicum (strain R).